The following is a 328-amino-acid chain: Tetraacyldisaccharide 4'-kinase (328 aa).

55–62 provides a ligand contact to ATP; sequence TAGGNGKT.

This sequence belongs to the LpxK family.

It catalyses the reaction a lipid A disaccharide + ATP = a lipid IVA + ADP + H(+). The protein operates within glycolipid biosynthesis; lipid IV(A) biosynthesis; lipid IV(A) from (3R)-3-hydroxytetradecanoyl-[acyl-carrier-protein] and UDP-N-acetyl-alpha-D-glucosamine: step 6/6. Functionally, transfers the gamma-phosphate of ATP to the 4'-position of a tetraacyldisaccharide 1-phosphate intermediate (termed DS-1-P) to form tetraacyldisaccharide 1,4'-bis-phosphate (lipid IVA). The sequence is that of Tetraacyldisaccharide 4'-kinase from Escherichia coli (strain 55989 / EAEC).